Consider the following 332-residue polypeptide: Endonuclease 8-like 2 (332 aa).

P2 acts as the Schiff-base intermediate with DNA in catalysis. E3 serves as the catalytic Proton donor. K50 acts as the Proton donor; for beta-elimination activity in catalysis. The residue at position 50 (K50) is an N6-acetyllysine. The interval 59–121 is disordered; the sequence is DEEMGPPGSS…EDDSEYLERD (63 aa). A Phosphoserine modification is found at S68. Residues 74–84 are compositionally biased toward basic and acidic residues; it reads PQKEVQKEGAA. Positions 94-104 are enriched in polar residues; it reads GQKTLDGSSRS. K154 is modified (N6-acetyllysine). N231 contributes to the DNA binding site. Residues 284 to 320 form an FPG-type zinc finger; the sequence is QVYQKEQCPAGHQVMKEAFGPEDGLQRLTWWCPQCQP. The active-site Proton donor; for delta-elimination activity is R310.

The protein belongs to the FPG family. In terms of assembly, binds EP300. Detected in testis, skeletal muscle, heart, brain, placenta, lung, pancreas, kidney and liver.

It is found in the nucleus. It catalyses the reaction 2'-deoxyribonucleotide-(2'-deoxyribose 5'-phosphate)-2'-deoxyribonucleotide-DNA = a 3'-end 2'-deoxyribonucleotide-(2,3-dehydro-2,3-deoxyribose 5'-phosphate)-DNA + a 5'-end 5'-phospho-2'-deoxyribonucleoside-DNA + H(+). Acetylation of Lys-50 leads to loss of DNA nicking activity. Acetylation of Lys-154 has no effect. In terms of biological role, involved in base excision repair of DNA damaged by oxidation or by mutagenic agents. Has DNA glycosylase activity towards 5-hydroxyuracil and other oxidized derivatives of cytosine with a preference for mismatched double-stranded DNA (DNA bubbles). Has low or no DNA glycosylase activity towards thymine glycol, 2-hydroxyadenine, hypoxanthine and 8-oxoguanine. Has AP (apurinic/apyrimidinic) lyase activity and introduces nicks in the DNA strand. Cleaves the DNA backbone by beta-delta elimination to generate a single-strand break at the site of the removed base with both 3'- and 5'-phosphates. The sequence is that of Endonuclease 8-like 2 (NEIL2) from Homo sapiens (Human).